We begin with the raw amino-acid sequence, 137 residues long: Large ribosomal subunit protein uL16 (137 aa).

This sequence belongs to the universal ribosomal protein uL16 family. As to quaternary structure, part of the 50S ribosomal subunit.

In terms of biological role, binds 23S rRNA and is also seen to make contacts with the A and possibly P site tRNAs. The sequence is that of Large ribosomal subunit protein uL16 from Rhizobium etli (strain CIAT 652).